We begin with the raw amino-acid sequence, 154 residues long: Endoribonuclease YbeY (154 aa).

Zn(2+) contacts are provided by His114, His118, and His124.

Belongs to the endoribonuclease YbeY family. Zn(2+) serves as cofactor.

It localises to the cytoplasm. In terms of biological role, single strand-specific metallo-endoribonuclease involved in late-stage 70S ribosome quality control and in maturation of the 3' terminus of the 16S rRNA. The protein is Endoribonuclease YbeY of Anaplasma phagocytophilum (strain HZ).